The chain runs to 397 residues: Metallophosphoesterase 1 (397 aa).

A helical transmembrane segment spans residues 27–47 (IAVVFAVLLFCEFLIYYLAIF). Residues aspartate 77, aspartate 119, asparagine 157, histidine 250, histidine 304, and histidine 306 each contribute to the a divalent metal cation site. A helical membrane pass occupies residues 357–377 (VVLIIYCGMVGFLVVLTLTHF). The Di-lysine motif motif lies at 393-397 (KRKTR).

It belongs to the metallophosphoesterase superfamily. MPPE1 family. In terms of assembly, interacts with GPI-anchor proteins (via the GPI portion). Interacts with TMED10. The cofactor is Mn(2+).

The protein localises to the endoplasmic reticulum-Golgi intermediate compartment membrane. In terms of biological role, metallophosphoesterase that catalyzes the removal of a side-chain ethanolamine-phosphate (EtNP) from the second mannose of the GPI-anchor protein intermediate. Participates in the glycan remodeling steps of GPI-anchor maturation to allow an efficient transport of GPI-anchor proteins from the endoplasmic reticulum to the Golgi. The protein is Metallophosphoesterase 1 of Pongo abelii (Sumatran orangutan).